The sequence spans 257 residues: Type III pantothenate kinase (257 aa).

Asp-6–Val-13 is a binding site for ATP. A substrate-binding site is contributed by Gly-107 to Arg-110. Asp-109 (proton acceptor) is an active-site residue. Residue Asp-129 participates in K(+) binding. Thr-132 lines the ATP pocket. Thr-184 contributes to the substrate binding site.

The protein belongs to the type III pantothenate kinase family. In terms of assembly, homodimer. NH4(+) serves as cofactor. K(+) is required as a cofactor.

Its subcellular location is the cytoplasm. It catalyses the reaction (R)-pantothenate + ATP = (R)-4'-phosphopantothenate + ADP + H(+). Its pathway is cofactor biosynthesis; coenzyme A biosynthesis; CoA from (R)-pantothenate: step 1/5. In terms of biological role, catalyzes the phosphorylation of pantothenate (Pan), the first step in CoA biosynthesis. The protein is Type III pantothenate kinase of Roseobacter denitrificans (strain ATCC 33942 / OCh 114) (Erythrobacter sp. (strain OCh 114)).